The sequence spans 147 residues: Large ribosomal subunit protein uL13 (147 aa).

Belongs to the universal ribosomal protein uL13 family. Part of the 50S ribosomal subunit.

In terms of biological role, this protein is one of the early assembly proteins of the 50S ribosomal subunit, although it is not seen to bind rRNA by itself. It is important during the early stages of 50S assembly. This Ligilactobacillus salivarius (strain UCC118) (Lactobacillus salivarius) protein is Large ribosomal subunit protein uL13.